The sequence spans 658 residues: Threonine--tRNA ligase (658 aa).

Positions 1-61 (MSDVRVTVQR…AAGDVVEPIT (61 aa)) constitute a TGS domain. A catalytic region spans residues 259–554 (DHRRLGAELD…LLEHYAGALP (296 aa)). Residues Cys-353, His-404, and His-531 each contribute to the Zn(2+) site.

Belongs to the class-II aminoacyl-tRNA synthetase family. Homodimer. Zn(2+) is required as a cofactor.

The protein resides in the cytoplasm. It carries out the reaction tRNA(Thr) + L-threonine + ATP = L-threonyl-tRNA(Thr) + AMP + diphosphate + H(+). Catalyzes the attachment of threonine to tRNA(Thr) in a two-step reaction: L-threonine is first activated by ATP to form Thr-AMP and then transferred to the acceptor end of tRNA(Thr). Also edits incorrectly charged L-seryl-tRNA(Thr). In Parafrankia sp. (strain EAN1pec), this protein is Threonine--tRNA ligase.